Consider the following 876-residue polypeptide: DDB1- and CUL4-associated factor 6 (876 aa).

5 WD repeats span residues 49 to 88 (VHDGCVNTICWNDTGEYILSGSDDTKLVISNPYSRKVLTT), 92 to 133 (GHRA…ETNR), 139 to 179 (CHYG…SCTK), 189 to 229 (NCRR…TRAT), and 251 to 290 (NKSCRVTSLCYSEDGQEILVSYSSDYIYLFDPKDDTAREL). Basic and acidic residues-rich tracts occupy residues 288–303 (RELKTPSAEERREELR) and 312–334 (LRGDWSDTGPRARPESERERDGE). Disordered stretches follow at residues 288 to 340 (RELK…PNVS), 355 to 391 (EASEVAQSNRGRGRPRPRGGTNQPDVSTLPTVPSSPN), 408 to 485 (LQPS…TEGT), 498 to 645 (WSST…NPEL), and 658 to 691 (EDPSARDSALQDTDDSDDDPVLIPGARYRTGPGD). Position 336 is a phosphoserine (Ser-336). Polar residues-rich tracts occupy residues 375–391 (TNQPDVSTLPTVPSSPN) and 409–422 (QPSTSSTDPVQAQA). Positions 456-466 (HQSDNSNERLS) are enriched in basic and acidic residues. Residues 499 to 510 (SSTASSSRGNGS) show a composition bias toward low complexity. Residues 534-544 (SETRAPEELSE) are compositionally biased toward basic and acidic residues. Polar residues-rich tracts occupy residues 550-562 (ENLTQNQIDTAQL), 571-584 (DSNSGEKNNPSQDS), 603-613 (EQASTESATRH), and 621-645 (PSQTEAIEQASTESATRHTSANPEL). A Phosphoserine modification is found at Ser-665. The residue at position 670 (Thr-670) is a Phosphothreonine. Ser-673 is subject to Phosphoserine. Positions 692-721 (RRSAVARIQEFFRRRKERKEMEELDTLNIR) constitute an IQ domain. WD repeat units lie at residues 734 to 772 (NSRTMIKEANFWGANFVMSGSDCGHIFIWDRHTAEHLML) and 775 to 814 (ADNHVVNCLQPHPFDPILASSGIDYDIKIWSPLEESRIFN). Ser-863 and Ser-866 each carry phosphoserine.

Interacts with the nuclear receptors NR3C1 and AR in the presence of ligand. Interacts with DDB1, CUL4A and CUL4B.

It is found in the nucleus. It participates in protein modification; protein ubiquitination. Its function is as follows. Ligand-dependent coactivator of nuclear receptors. Enhance transcriptional activity of the nuclear receptors NR3C1 and AR. May function as a substrate receptor for CUL4-DDB1 E3 ubiquitin-protein ligase complex. This is DDB1- and CUL4-associated factor 6 (Dcaf6) from Mus musculus (Mouse).